The primary structure comprises 273 residues: Dermonecrotic toxin LhSicTox-alphaIA2biv (273 aa).

The active site involves His5. The Mg(2+) site is built by Glu25 and Asp27. Residue His41 is the Nucleophile of the active site. Disulfide bonds link Cys45–Cys51 and Cys47–Cys190. A Mg(2+)-binding site is contributed by Asp85.

This sequence belongs to the arthropod phospholipase D family. Class II subfamily. Requires Mg(2+) as cofactor. In terms of tissue distribution, expressed by the venom gland.

The protein resides in the secreted. The catalysed reaction is an N-(acyl)-sphingosylphosphocholine = an N-(acyl)-sphingosyl-1,3-cyclic phosphate + choline. It carries out the reaction an N-(acyl)-sphingosylphosphoethanolamine = an N-(acyl)-sphingosyl-1,3-cyclic phosphate + ethanolamine. It catalyses the reaction a 1-acyl-sn-glycero-3-phosphocholine = a 1-acyl-sn-glycero-2,3-cyclic phosphate + choline. The enzyme catalyses a 1-acyl-sn-glycero-3-phosphoethanolamine = a 1-acyl-sn-glycero-2,3-cyclic phosphate + ethanolamine. Dermonecrotic toxins cleave the phosphodiester linkage between the phosphate and headgroup of certain phospholipids (sphingolipid and lysolipid substrates), forming an alcohol (often choline) and a cyclic phosphate. This toxin acts on sphingomyelin (SM). It may also act on ceramide phosphoethanolamine (CPE), lysophosphatidylcholine (LPC) and lysophosphatidylethanolamine (LPE), but not on lysophosphatidylserine (LPS), and lysophosphatidylglycerol (LPG). It acts by transphosphatidylation, releasing exclusively cyclic phosphate products as second products. Induces dermonecrosis, hemolysis, increased vascular permeability, edema, inflammatory response, and platelet aggregation. The protein is Dermonecrotic toxin LhSicTox-alphaIA2biv of Loxosceles hirsuta (Recluse spider).